A 100-amino-acid chain; its full sequence is Enhancer of yellow 2 transcription factor (100 aa).

Belongs to the ENY2 family. In terms of assembly, component of the nuclear pore complex (NPC)-associated AMEX complex (anchoring and mRNA export complex), composed of at least e(y)2 and xmas-2. Component of the SAGA transcription coactivator-HAT complexes, at least composed of Ada2b, e(y)2, Pcaf/Gcn5, Taf10 and Nipped-A/Trrap. Within the SAGA complex, e(y)2, Sgf11, and not/nonstop form an additional subcomplex of SAGA called the DUB module (deubiquitination module). Component of the THO complex, composed of at least e(y)2, HPR1, THO2, THOC5, THOC6 and THOC7. Interacts with e(y)1. Interacts with su(Hw) (via zinc fingers). Interacts with xmas-2; required for localization to the nuclear periphery. Interacts with the nuclear pore complex (NPC).

It is found in the nucleus. The protein localises to the nucleoplasm. The protein resides in the cytoplasm. Its function is as follows. Involved in mRNA export coupled transcription activation by association with both the AMEX and the SAGA complexes. The SAGA complex is a multiprotein complex that activates transcription by remodeling chromatin and mediating histone acetylation and deubiquitination. Within the SAGA complex, participates in a subcomplex that specifically deubiquitinates histone H2B. The SAGA complex is recruited to specific gene promoters by activators, where it is required for transcription. Required for nuclear receptor-mediated transactivation. Involved in transcription elongation by recruiting the THO complex onto nascent mRNA. The AMEX complex functions in docking export-competent ribonucleoprotein particles (mRNPs) to the nuclear entrance of the nuclear pore complex (nuclear basket). AMEX participates in mRNA export and accurate chromatin positioning in the nucleus by tethering genes to the nuclear periphery. This chain is Enhancer of yellow 2 transcription factor, found in Drosophila pseudoobscura pseudoobscura (Fruit fly).